The sequence spans 77 residues: Small nuclear ribonucleoprotein G (77 aa).

Residues 2-77 (VSTPELKKYM…IISLEALDAI (76 aa)) enclose the Sm domain.

This sequence belongs to the snRNP Sm proteins family. Component of the Sm core complex, present in spliceosomal snRNP U1, U2, U4/U6 and U5. The core complex contains SMB1, SMD1, SMD2, SMD3, SME1, SMX3 and SMX2 (Sm proteins B, D1, D2, D3, E, F and G, respectively), and is probably a heptameric ring structure. SMX2 specifically interacts with SME1. Belongs to the CWC complex (or CEF1-associated complex), a spliceosome sub-complex reminiscent of a late-stage spliceosome composed of the U2, U5 and U6 snRNAs and at least BUD13, BUD31, BRR2, CDC40, CEF1, CLF1, CUS1, CWC2, CWC15, CWC21, CWC22, CWC23, CWC24, CWC25, CWC27, ECM2, HSH155, IST3, ISY1, LEA1, MSL1, NTC20, PRP8, PRP9, PRP11, PRP19, PRP21, PRP22, PRP45, PRP46, SLU7, SMB1, SMD1, SMD2, SMD3, SMX2, SMX3, SNT309, SNU114, SPP2, SYF1, SYF2, RSE1 and YJU2. Component of the U4/U6-U5 tri-snRNP complex composed of the U4, U6 and U5 snRNAs and at least PRP3, PRP4, PRP6, PRP8, PRP18, PRP31, PRP38, SNU13, SNU23, SNU66, SNU114, SPP381, SMB1, SMD1, SMD2, SMD3, SMX2, SMX3, LSM2, LSM3, LSM4, LSM5, LSM6, LSM7, LSM8, BRR2 and DIB1.

The protein localises to the nucleus. Its subcellular location is the cytoplasm. Functionally, plays a role in pre-mRNA splicing as a core component of the spliceosomal U1, U2, U4 and U5 small nuclear ribonucleoproteins (snRNPs), the building blocks of the spliceosome. This chain is Small nuclear ribonucleoprotein G (SMX2), found in Saccharomyces cerevisiae (strain ATCC 204508 / S288c) (Baker's yeast).